A 338-amino-acid chain; its full sequence is Ketol-acid reductoisomerase (NADP(+)) (338 aa).

In terms of domain architecture, KARI N-terminal Rossmann spans 1–181 (MQVYYDKDCD…GGGRTGIIET (181 aa)). NADP(+)-binding positions include 24–27 (FGSQ), Arg-47, Ser-50, Ser-52, and 82–85 (DEFQ). Residue His-107 is part of the active site. Gly-133 serves as a coordination point for NADP(+). Positions 182–327 (TFRDECETDL…RKLRAMMPWI (146 aa)) constitute a KARI C-terminal knotted domain. 4 residues coordinate Mg(2+): Asp-190, Glu-194, Glu-226, and Glu-230. Residue Ser-251 participates in substrate binding.

It belongs to the ketol-acid reductoisomerase family. Requires Mg(2+) as cofactor.

It catalyses the reaction (2R)-2,3-dihydroxy-3-methylbutanoate + NADP(+) = (2S)-2-acetolactate + NADPH + H(+). It carries out the reaction (2R,3R)-2,3-dihydroxy-3-methylpentanoate + NADP(+) = (S)-2-ethyl-2-hydroxy-3-oxobutanoate + NADPH + H(+). The protein operates within amino-acid biosynthesis; L-isoleucine biosynthesis; L-isoleucine from 2-oxobutanoate: step 2/4. It participates in amino-acid biosynthesis; L-valine biosynthesis; L-valine from pyruvate: step 2/4. Functionally, involved in the biosynthesis of branched-chain amino acids (BCAA). Catalyzes an alkyl-migration followed by a ketol-acid reduction of (S)-2-acetolactate (S2AL) to yield (R)-2,3-dihydroxy-isovalerate. In the isomerase reaction, S2AL is rearranged via a Mg-dependent methyl migration to produce 3-hydroxy-3-methyl-2-ketobutyrate (HMKB). In the reductase reaction, this 2-ketoacid undergoes a metal-dependent reduction by NADPH to yield (R)-2,3-dihydroxy-isovalerate. This is Ketol-acid reductoisomerase (NADP(+)) from Hydrogenovibrio crunogenus (strain DSM 25203 / XCL-2) (Thiomicrospira crunogena).